Reading from the N-terminus, the 321-residue chain is G-protein coupled receptor aex-2 (321 aa).

At 1–24 (MNSTDIIANVTKPFVENLTLGETA) the chain is on the extracellular side. N-linked (GlcNAc...) asparagine glycosylation is found at asparagine 2, asparagine 9, and asparagine 17. A helical transmembrane segment spans residues 25–45 (FYISCGIVGTVFNALVLWIAL). At 46–55 (TYINTEDKPR) the chain is on the cytoplasmic side. A helical membrane pass occupies residues 56–76 (QIIVINMTVADLLMCIVYMKT). Residues 77–90 (RPWLSHFNLWLCHP) lie on the Extracellular side of the membrane. Cysteine 88 and cysteine 161 are joined by a disulfide. The helical transmembrane segment at 91–111 (YYVIIWTCQMCSCLNLVWLNV) threads the bilayer. Over 112–132 (DKLIYIQFPLHYYQIVNRKRL) the chain is Cytoplasmic. The helical transmembrane segment at 133–153 (LWITAATWGGLYAMNIALVTF) threads the bilayer. At 154 to 175 (LKITRGSCLGVSLNPYVYLLSP) the chain is on the extracellular side. The chain crosses the membrane as a helical span at residues 176–196 (IFYVVMILTSFSLSALIYCIA). Topologically, residues 197–221 (HNLTHMEERQRSKLFRRLFFLFSST) are cytoplasmic. Residues 222-242 (LWTFFTCLPYRLLYLFSIFCG) form a helical membrane-spanning segment. Residues 243-254 (ETCQINNYYKTA) are Extracellular-facing. Residues 255–275 (TNLFFRLLIVGIMINPVITIW) form a helical membrane-spanning segment. Over 276–321 (TQRIYRLRLMRMFGRLRENSSTEVLMVSNRRASERPPEHTPLRCDM) the chain is Cytoplasmic.

This sequence belongs to the G-protein coupled receptor 1 family. In terms of tissue distribution, expressed in the intestinal muscle, anal depressor, AVL and DVB GABAergic neurons, enteric muscles, the nerve ring, the ventral nerve cord and head mesodermal cells.

Its subcellular location is the cell membrane. The protein localises to the cell projection. The protein resides in the cilium. Its function is as follows. G-protein coupled receptor for the nlp-40 neuropeptide. The activity of this receptor is mediated by G proteins which activate adenylyl cyclase. Plays a role in the defecation motor program, which is a coordinated series of three muscle contractions that occurs every 45 seconds. Specifically, acts in GABAergic neurons, such as AVL and DVB, to control the expulsion step of defecation. Required for fatty acid uptake and metabolism by intestinal cells and therefore regulates the levels of triglycerides in the intestine. The polypeptide is G-protein coupled receptor aex-2 (Caenorhabditis elegans).